The following is a 446-amino-acid chain: D(1A) dopamine receptor (446 aa).

Residues 1 to 22 (MAPNTSTMDEAGLPAERDFSFR) lie on the Extracellular side of the membrane. The N-linked (GlcNAc...) asparagine glycan is linked to Asn-4. Residues 23-48 (ILTACFLSLLILSTLLGNTLVCAAVI) traverse the membrane as a helical segment. The Cytoplasmic segment spans residues 49–59 (RFRHLRSKVTN). The chain crosses the membrane as a helical span at residues 60–86 (FFVISLAVSDLLVAVLVMPWKAVAEIA). Residues 87–95 (GFWPLGPFC) are Extracellular-facing. A disulfide bridge links Cys-95 with Cys-186. A helical membrane pass occupies residues 96–118 (NIWVAFDIMCSTASILNLCVISV). Over 119-137 (DRYWAISSPFQYERKMTPK) the chain is Cytoplasmic. The chain crosses the membrane as a helical span at residues 138-162 (AAFILISVAWTLSVLISFIPVQLSW). At 163–192 (HKAKPTWPLDGNFTSLEDTEDDNCDTRLSR) the chain is on the extracellular side. The chain crosses the membrane as a helical span at residues 193–218 (TYAISSSLISFYIPVAIMIVTYTSIY). The Cytoplasmic portion of the chain corresponds to 219-272 (RIAQKQIRRISALERAAVHAKNCQTTAGNGNPVECAQSESSFKMSFKRETKVLK). The chain crosses the membrane as a helical span at residues 273–299 (TLSVIMGVFVCCWLPFFISNCMVPFCG). The Extracellular portion of the chain corresponds to 300–312 (SEETQPFCIDSIT). Residues 313 to 337 (FDVFVWFGWANSSLNPIIYAFNADF) form a helical membrane-spanning segment. The Cytoplasmic portion of the chain corresponds to 338 to 446 (QKAFSTLLGC…PVTHSGQHST (109 aa)). 2 S-palmitoyl cysteine lipidation sites follow: Cys-347 and Cys-351.

This sequence belongs to the G-protein coupled receptor 1 family. As to quaternary structure, interacts with DNAJC14 via its C-terminus PubMed:11331877. Interacts with DRD2. Interacts with DORIP1. N-glycosylated. As to expression, brain, in the striatum, the nucleus accumbens, and the olfactory tubercle.

It localises to the cell membrane. The protein localises to the endoplasmic reticulum membrane. It is found in the cell projection. The protein resides in the dendrite. Its subcellular location is the cilium membrane. It localises to the dendritic spine. Its function is as follows. Dopamine receptor whose activity is mediated by G proteins which activate adenylyl cyclase. This is D(1A) dopamine receptor (Drd1) from Rattus norvegicus (Rat).